Reading from the N-terminus, the 150-residue chain is Arginine repressor (150 aa).

This sequence belongs to the ArgR family.

The protein resides in the cytoplasm. It functions in the pathway amino-acid biosynthesis; L-arginine biosynthesis [regulation]. In terms of biological role, regulates arginine biosynthesis genes. The sequence is that of Arginine repressor from Staphylococcus carnosus (strain TM300).